The primary structure comprises 549 residues: Oxygen-dependent choline dehydrogenase (549 aa).

Asp4–Glu33 provides a ligand contact to FAD. Residue His465 is the Proton acceptor of the active site. The tract at residues Lys528–Arg549 is disordered.

The protein belongs to the GMC oxidoreductase family. FAD serves as cofactor.

The catalysed reaction is choline + A = betaine aldehyde + AH2. It carries out the reaction betaine aldehyde + NAD(+) + H2O = glycine betaine + NADH + 2 H(+). It functions in the pathway amine and polyamine biosynthesis; betaine biosynthesis via choline pathway; betaine aldehyde from choline (cytochrome c reductase route): step 1/1. Functionally, involved in the biosynthesis of the osmoprotectant glycine betaine. Catalyzes the oxidation of choline to betaine aldehyde and betaine aldehyde to glycine betaine at the same rate. The chain is Oxygen-dependent choline dehydrogenase from Agrobacterium fabrum (strain C58 / ATCC 33970) (Agrobacterium tumefaciens (strain C58)).